A 95-amino-acid chain; its full sequence is Aspartyl/glutamyl-tRNA(Asn/Gln) amidotransferase subunit C (95 aa).

This sequence belongs to the GatC family. In terms of assembly, heterotrimer of A, B and C subunits.

It carries out the reaction L-glutamyl-tRNA(Gln) + L-glutamine + ATP + H2O = L-glutaminyl-tRNA(Gln) + L-glutamate + ADP + phosphate + H(+). It catalyses the reaction L-aspartyl-tRNA(Asn) + L-glutamine + ATP + H2O = L-asparaginyl-tRNA(Asn) + L-glutamate + ADP + phosphate + 2 H(+). Allows the formation of correctly charged Asn-tRNA(Asn) or Gln-tRNA(Gln) through the transamidation of misacylated Asp-tRNA(Asn) or Glu-tRNA(Gln) in organisms which lack either or both of asparaginyl-tRNA or glutaminyl-tRNA synthetases. The reaction takes place in the presence of glutamine and ATP through an activated phospho-Asp-tRNA(Asn) or phospho-Glu-tRNA(Gln). The polypeptide is Aspartyl/glutamyl-tRNA(Asn/Gln) amidotransferase subunit C (Halothermothrix orenii (strain H 168 / OCM 544 / DSM 9562)).